The following is a 218-amino-acid chain: N-(5'-phosphoribosyl)anthranilate isomerase (218 aa).

This sequence belongs to the TrpF family.

The enzyme catalyses N-(5-phospho-beta-D-ribosyl)anthranilate = 1-(2-carboxyphenylamino)-1-deoxy-D-ribulose 5-phosphate. It participates in amino-acid biosynthesis; L-tryptophan biosynthesis; L-tryptophan from chorismate: step 3/5. The protein is N-(5'-phosphoribosyl)anthranilate isomerase of Bordetella parapertussis (strain 12822 / ATCC BAA-587 / NCTC 13253).